Here is a 257-residue protein sequence, read N- to C-terminus: Large ribosomal subunit protein uL2 (257 aa).

The disordered stretch occupies residues 207-231 (VEHPFGGGNHQHIGKPSTIRRDAPA).

The protein belongs to the universal ribosomal protein uL2 family. Component of the large ribosomal subunit.

It localises to the cytoplasm. Functionally, component of the large ribosomal subunit. The ribosome is a large ribonucleoprotein complex responsible for the synthesis of proteins in the cell. The sequence is that of Large ribosomal subunit protein uL2 (rpl8) from Xenopus laevis (African clawed frog).